The following is a 323-amino-acid chain: MKNLTLHQLKVFEAAARHSSFTRAAEELYLTQPTVSIQVKQLTKAVGLPLFEQIGKRLYLTEAGRQLYKTTRQVFEQLEQLDMTIADLQGMKQGQLRLAVITTAKYFIPRLIGPFCQRYPGINVSLKVTNHEGLINRINDNLDDLYVLSRPPSGFDITVQPFLDNPLVVVGPASHPLANQRGISLERLAQEPFILRERGSGTREATEQLFAAHNLNLNVKLDLGSNEAIKQAILGGLGLAVLSYHTLTSAGATPELKMFEVEGFPIHRQWHAVYPAGKQLSTVAATFLDYLLTESQRIAADIQIPESTTTDPELDAPQPVVGV.

In terms of domain architecture, HTH lysR-type spans 4–61; that stretch reads LTLHQLKVFEAAARHSSFTRAAEELYLTQPTVSIQVKQLTKAVGLPLFEQIGKRLYLT. The segment at residues 21-40 is a DNA-binding region (H-T-H motif); that stretch reads FTRAAEELYLTQPTVSIQVK. The tract at residues 304–323 is disordered; the sequence is IPESTTTDPELDAPQPVVGV.

This sequence belongs to the LysR transcriptional regulatory family.

It is found in the cytoplasm. Its function is as follows. Activates transcription of the cmpABCD operon under carbon dioxide-limited conditions. This chain is HTH-type transcriptional activator CmpR (cmpR), found in Synechococcus elongatus (strain ATCC 33912 / PCC 7942 / FACHB-805) (Anacystis nidulans R2).